We begin with the raw amino-acid sequence, 155 residues long: Small ribosomal subunit protein uS7c (155 aa).

It belongs to the universal ribosomal protein uS7 family. In terms of assembly, part of the 30S ribosomal subunit.

The protein resides in the plastid. It localises to the chloroplast. One of the primary rRNA binding proteins, it binds directly to 16S rRNA where it nucleates assembly of the head domain of the 30S subunit. The polypeptide is Small ribosomal subunit protein uS7c (rps7) (Chaetosphaeridium globosum (Charophycean green alga)).